Here is a 1522-residue protein sequence, read N- to C-terminus: Rho guanine nucleotide exchange factor 11 (1522 aa).

Residues Met1–Thr40 form a disordered region. Phosphoserine is present on residues Ser2, Ser14, Ser16, and Ser35. Residues Cys47 to Ser126 form the PDZ domain. Disordered stretches follow at residues Gly128 to Gln175 and Tyr200 to Pro231. Positions Pro149–Gln161 are enriched in pro residues. 2 positions are modified to phosphoserine: Ser245 and Ser251. Thr254 is subject to Phosphothreonine. Ser255 and Ser271 each carry phosphoserine. Residues Ala263–Ser286 are disordered. An RGSL domain is found at Glu306–Arg486. The stretch at Leu444 to Ala470 forms a coiled coil. The segment at Ala490–Leu555 is disordered. A compositionally biased stretch (basic and acidic residues) spans Ser521–Arg533. Phosphoserine occurs at positions 556, 635, and 663. Residues Glu573–Ile680 are disordered. Over residues Asp601–Val637 the composition is skewed to basic and acidic residues. Low complexity predominate over residues Ser651–Leu664. Residues Thr668 and Thr672 each carry the phosphothreonine modification. A DH domain is found at Asp734–Ala923. Positions Lys965–Arg1079 constitute a PH domain. The segment at His1084–Gly1141 is disordered. The span at Pro1091–Arg1100 shows a compositional bias: pro residues. Positions Val1112–Pro1124 are enriched in basic and acidic residues. Phosphoserine is present on Ser1155. Disordered regions lie at residues Glu1223–Tyr1320, Lys1332–Gly1423, and Leu1453–Pro1522. The segment covering Pro1236–Ser1245 has biased composition (polar residues). A phosphoserine mark is found at Ser1295 and Ser1300. The segment covering Pro1338–Gly1353 has biased composition (low complexity). Phosphoserine is present on residues Ser1457 and Ser1458. 2 positions are modified to phosphothreonine: Thr1462 and Thr1475. Ser1480 is modified (phosphoserine). Acidic residues predominate over residues Asp1503–Thr1513.

As to quaternary structure, interacts with GNA12 and GNA13 through the RGS domain. Interacts with RHOA, PLXNB1 and PLXNB2. Interacts with SLC1A6. Interacts (via DH domain) with GCSAM (via C-terminus). Found in a complex with ARHGEF11 and ARHGEF12; binding to ARHGEF11 and ARHGEF12 enhances CDC42 GEF activity of PLEKHG4B, and PLEKHG4B, in turn, inhibits ARHGEF11- and ARHGEF12-mediated RHOA activation. Post-translationally, phosphorylated by MAP kinase p38 (MAPK11, MAPK12, MAPK13 and/or MAPK14). Ubiquitinated by the BCR(KLHL20) E3 ubiquitin ligase complex when previously phosphorylated by MAP kinase p38 (MAPK11, MAPK12, MAPK13 and/or MAPK14), leading to its degradation, thereby restricting RhoA activity and facilitating growth cone spreading and neurite outgrowth. In terms of tissue distribution, ubiquitously expressed.

It localises to the cytoplasm. It is found in the membrane. May play a role in the regulation of RhoA GTPase by guanine nucleotide-binding alpha-12 (GNA12) and alpha-13 (GNA13). Acts as guanine nucleotide exchange factor (GEF) for RhoA GTPase and may act as GTPase-activating protein (GAP) for GNA12 and GNA13. Involved in neurotrophin-induced neurite outgrowth. This Homo sapiens (Human) protein is Rho guanine nucleotide exchange factor 11 (ARHGEF11).